The chain runs to 84 residues: uncharacterized protein (84 aa).

This is an uncharacterized protein from Azorhizobium caulinodans (strain ATCC 43989 / DSM 5975 / JCM 20966 / LMG 6465 / NBRC 14845 / NCIMB 13405 / ORS 571).